Here is a 324-residue protein sequence, read N- to C-terminus: Homoserine kinase (324 aa).

Residue 87 to 97 (PVARGMGSSAA) participates in ATP binding.

The protein belongs to the GHMP kinase family. Homoserine kinase subfamily.

The protein resides in the cytoplasm. It carries out the reaction L-homoserine + ATP = O-phospho-L-homoserine + ADP + H(+). The protein operates within amino-acid biosynthesis; L-threonine biosynthesis; L-threonine from L-aspartate: step 4/5. Functionally, catalyzes the ATP-dependent phosphorylation of L-homoserine to L-homoserine phosphate. The polypeptide is Homoserine kinase (Symbiobacterium thermophilum (strain DSM 24528 / JCM 14929 / IAM 14863 / T)).